Reading from the N-terminus, the 343-residue chain is Cyclic AMP-AMP-AMP synthase (343 aa).

The protein belongs to the CD-NTase family. D01 subfamily. Requires Mg(2+) as cofactor.

It carries out the reaction 3 ATP = 2',3',3'-c-tri-AMP + 3 diphosphate. In terms of biological role, cyclic nucleotide synthase (second messenger synthase) of a CBASS antivirus system. CBASS (cyclic oligonucleotide-based antiphage signaling system) provides immunity against bacteriophage. The CD-NTase protein synthesizes cyclic nucleotides in response to infection; these serve as specific second messenger signals. The signals activate a diverse range of effectors, leading to bacterial cell death and thus abortive phage infection. A type II-C(AAAA) CBASS system. Cyclic trinucleotide synthase that catalyzes the synthesis of 2',3',3'-cyclic AMP-AMP-AMP (2',3',3'-c-tri-AMP or 2'3'3'-cAAA) as the major product, as well as another cyclic AMP(4) 2'-5'-linked minor product that acts as a second messenger for cell signal transduction. In Acinetobacter sp. (strain ATCC 27244 / 9458), this protein is Cyclic AMP-AMP-AMP synthase.